The chain runs to 343 residues: Lumican (343 aa).

Residues 1 to 18 (MTLNSLPIFLVLISGIFC) form the signal peptide. Gln19 carries the pyrrolidone carboxylic acid modification. Residues Tyr20 and Tyr22 each carry the sulfotyrosine modification. An LRRNT domain is found at 31–69 (DPFGPSTAVCAPECNCPLSYPTAMYCDNLKLKTIPIVPS). LRR repeat units lie at residues 70-91 (GIKY…TFDN), 94-117 (DLQW…VFSK), 120-140 (NLKK…PLPK), 141-162 (TLDD…ALEG), 165-186 (NLTV…GAFK), 190-211 (SLLY…LPHS), 212-232 (LLML…YFQG), and 235-255 (TLQY…PGNV). Asn91 carries an N-linked (GlcNAc...) (keratan sulfate) asparagine glycan. Asn130 carries an N-linked (GlcNAc...) (keratan sulfate) asparagine glycan. Asn165 carries N-linked (GlcNAc...) (keratan sulfate) asparagine glycosylation. N-linked (GlcNAc...) (keratan sulfate) asparagine glycosylation is present at Asn257. LRR repeat units lie at residues 260–281 (SLVE…SENL), 282–301 (ENFY…SFCK), and 310–330 (KITH…PQEM). A disulfide bond links Cys300 and Cys333. An N-linked (GlcNAc...) asparagine glycan is attached at Asn320.

It belongs to the small leucine-rich proteoglycan (SLRP) family. SLRP class II subfamily. Binds to laminin. In terms of processing, contains keratan sulfate. In terms of tissue distribution, cornea and other tissues.

Its subcellular location is the secreted. It is found in the extracellular space. It localises to the extracellular matrix. This chain is Lumican (LUM), found in Gallus gallus (Chicken).